The sequence spans 1048 residues: Pleckstrin homology domain-containing family A member 6 (1048 aa).

Positions 1 to 22 are enriched in polar residues; sequence MSNKTGGKRPATTNSDIPNHNM. The disordered stretch occupies residues 1–36; that stretch reads MSNKTGGKRPATTNSDIPNHNMVSEVPPERPSVRAT. Residues 59–158 enclose the PH domain; sequence PVTKAGWLFK…WIQAMGEAAR (100 aa). Disordered stretches follow at residues 165–318 and 448–467; these read QKSV…MNQL and SLQP…SYSR. The segment covering 201-233 has biased composition (basic and acidic residues); that stretch reads PEPEAKTRGEGDGRGCEKAERRPERPEVKKEPP. 2 positions are modified to phosphoserine: Ser-247 and Ser-251. Residues 267–290 are compositionally biased toward polar residues; that stretch reads AQPNGWQYHSPSRPGSTAFPSQDG. Residues Ser-314, Ser-459, Ser-461, and Ser-472 each carry the phosphoserine modification. Residues 456 to 465 show a composition bias toward polar residues; it reads VPRSPSQGSY. The residue at position 492 (Tyr-492) is a Phosphotyrosine. Ser-591 is modified (phosphoserine). The tract at residues 663-746 is disordered; that stretch reads RKNNPSRGTD…HQTLPLDTPR (84 aa). Over residues 687-711 the composition is skewed to low complexity; that stretch reads SSNSPASPLSSASLTSPLSPFSLVS. Polar residues predominate over residues 712 to 721; it reads GSQGSPTKPG. The residue at position 744 (Thr-744) is a Phosphothreonine. Ser-777 is subject to Phosphoserine. At Thr-784 the chain carries Phosphothreonine. The tract at residues 793 to 858 is disordered; that stretch reads ASGLTNGLSS…PAPDPSPRPA (66 aa). Positions 794–803 are enriched in polar residues; that stretch reads SGLTNGLSSQ. Ser-801 carries the post-translational modification Phosphoserine. Over residues 815 to 827 the composition is skewed to basic and acidic residues; the sequence is GKVKMSVEEQIDR. The span at 828-842 shows a compositional bias: basic residues; it reads MRRHQSGSMREKRRS. Phosphoserine occurs at positions 848, 854, and 867. Thr-920 bears the Phosphothreonine mark. Position 940 is a phosphoserine (Ser-940). Disordered stretches follow at residues 968 to 989 and 1005 to 1048; these read PIGE…QEQE and RGRM…TMRV. Residue Thr-1015 is modified to Phosphothreonine. The span at 1016–1030 shows a compositional bias: pro residues; the sequence is PSPPTSPASPAPPAN. A Phosphoserine modification is found at Ser-1017. Thr-1020 carries the post-translational modification Phosphothreonine. Ser-1021 and Ser-1024 each carry phosphoserine.

As to expression, highly expressed in heart, kidney and throughout the brain.

The chain is Pleckstrin homology domain-containing family A member 6 (PLEKHA6) from Homo sapiens (Human).